A 245-amino-acid polypeptide reads, in one-letter code: 1-(5-phosphoribosyl)-5-[(5-phosphoribosylamino)methylideneamino] imidazole-4-carboxamide isomerase (245 aa).

The active-site Proton acceptor is Asp7. The active-site Proton donor is the Asp129.

This sequence belongs to the HisA/HisF family.

The protein resides in the cytoplasm. It catalyses the reaction 1-(5-phospho-beta-D-ribosyl)-5-[(5-phospho-beta-D-ribosylamino)methylideneamino]imidazole-4-carboxamide = 5-[(5-phospho-1-deoxy-D-ribulos-1-ylimino)methylamino]-1-(5-phospho-beta-D-ribosyl)imidazole-4-carboxamide. It functions in the pathway amino-acid biosynthesis; L-histidine biosynthesis; L-histidine from 5-phospho-alpha-D-ribose 1-diphosphate: step 4/9. The polypeptide is 1-(5-phosphoribosyl)-5-[(5-phosphoribosylamino)methylideneamino] imidazole-4-carboxamide isomerase (Alteromonas mediterranea (strain DSM 17117 / CIP 110805 / LMG 28347 / Deep ecotype)).